Reading from the N-terminus, the 82-residue chain is Acyl carrier protein (82 aa).

Positions 3 to 78 (QEIFERVKKV…KAVEHISEKV (76 aa)) constitute a Carrier domain. Residue serine 38 is modified to O-(pantetheine 4'-phosphoryl)serine.

The protein belongs to the acyl carrier protein (ACP) family. In terms of processing, 4'-phosphopantetheine is transferred from CoA to a specific serine of apo-ACP by AcpS. This modification is essential for activity because fatty acids are bound in thioester linkage to the sulfhydryl of the prosthetic group.

The protein localises to the cytoplasm. It functions in the pathway lipid metabolism; fatty acid biosynthesis. Carrier of the growing fatty acid chain in fatty acid biosynthesis. The chain is Acyl carrier protein from Gloeothece citriformis (strain PCC 7424) (Cyanothece sp. (strain PCC 7424)).